The primary structure comprises 60 residues: Large ribosomal subunit protein bL32 (60 aa).

Positions 1–20 (MAKPARHTSKAKRNKRRTHY) are enriched in basic residues. A disordered region spans residues 1–22 (MAKPARHTSKAKRNKRRTHYKL).

This sequence belongs to the bacterial ribosomal protein bL32 family.

This is Large ribosomal subunit protein bL32 from Streptococcus agalactiae serotype V (strain ATCC BAA-611 / 2603 V/R).